The sequence spans 921 residues: MADNNTPGDKKLSVPTKTLTLKPRVETGTVRQSFPHGRSKQVVVEKRGTKRRVGDGAPDAPHAPEPVVAKAPPPPPPSNRPSGPRPGSSQRGGSGVVLRTLTEDERSARASALADARVRDMEERRQAEEEARRRAEREAAERAEREAAEARRKAEEERHRQEEEAKRKAELEAKKRFGEGEAPRPATAAPQQQPAAVTAPARPAQAPGRPQGAPGSRPQQIGTSARPGGAQPAGARPAAARPAGAGPLGRAPGVAAGPEDDEGPRQIRRGPGGAARPAPPPKTTHKPGPQKQRGRLTVVTALTADDVRERSIASFRRRTQRLKGHAANEQKEKLVREVTIPEAITIQELANRMSERAVDVIRLLMRQGAMHKITDVIDADTAQLIAEELGHSVKRVAASDVEEGLFDVVDDSTDTEPRSPVVTVMGHVDHGKTSLLDALRHANVVSGEAGGITQHIGAYQVTAPDSGKKITFIDTPGHAAFTAMRARGAKVTDIVVLVVAADDGVMPQTIEAINHAKAAKVPMIVAINKIDKPDARPDRVRTELLQHEVQVESLGGEVVDVEVSAKNKTNLDRLLEMIALQADILDLKTNSDRPAEGTVIEAKLDRGRGPVATVLVQRGTLRVGDIIVAGAEMGRVRALISDQGETLQEAGPSVPVEVLGFNGPPEAGDRLAVVENEARARQVTSYRAHQKRENAAASISGMRGSLEQMMSQLKTAGRKEFPLVIKADVQGSLEAILGSLEKLGTDEVAARILHAGVGGISESDVTLAEGFNAAIIGFSVRANKEAAALAKRNGIEIRYYNIIYDLVDDVKKAMSGLLAPTLRETMLGNAQILEVFNISKVGKVAGCRVTDGTVERGANVRLIRDNVVVHEGKLSTLKRFKDEVKEVQAGQECGMAFESYGDMRVGDVIECYRVETIQRSL.

The tract at residues 1-296 is disordered; that stretch reads MADNNTPGDK…PGPQKQRGRL (296 aa). Positions 80–89 are enriched in low complexity; it reads RPSGPRPGSS. A compositionally biased stretch (basic and acidic residues) spans 116–182; the sequence is ARVRDMEERR…AKKRFGEGEA (67 aa). The span at 183 to 257 shows a compositional bias: low complexity; that stretch reads PRPATAAPQQ…LGRAPGVAAG (75 aa). Residues 417–586 form the tr-type G domain; that stretch reads PRSPVVTVMG…MIALQADILD (170 aa). The tract at residues 426–433 is G1; it reads GHVDHGKT. 426 to 433 contacts GTP; sequence GHVDHGKT. Residues 451-455 form a G2 region; it reads GITQH. Positions 474–477 are G3; that stretch reads DTPG. GTP is bound by residues 474 to 478 and 528 to 531; these read DTPGH and NKID. The segment at 528–531 is G4; sequence NKID. A G5 region spans residues 564 to 566; it reads SAK.

The protein belongs to the TRAFAC class translation factor GTPase superfamily. Classic translation factor GTPase family. IF-2 subfamily.

The protein localises to the cytoplasm. One of the essential components for the initiation of protein synthesis. Protects formylmethionyl-tRNA from spontaneous hydrolysis and promotes its binding to the 30S ribosomal subunits. Also involved in the hydrolysis of GTP during the formation of the 70S ribosomal complex. The sequence is that of Translation initiation factor IF-2 from Bradyrhizobium sp. (strain BTAi1 / ATCC BAA-1182).